Consider the following 410-residue polypeptide: Cysteine desulfurase IscS (410 aa).

Residues 80–81 (AT), Asn-160, Gln-188, and 208–210 (SGH) each bind pyridoxal 5'-phosphate. An N6-(pyridoxal phosphate)lysine modification is found at Lys-211. Thr-248 lines the pyridoxal 5'-phosphate pocket. The active-site Cysteine persulfide intermediate is Cys-334. Cys-334 is a [2Fe-2S] cluster binding site.

The protein belongs to the class-V pyridoxal-phosphate-dependent aminotransferase family. NifS/IscS subfamily. As to quaternary structure, homodimer. Forms a heterotetramer with IscU, interacts with other sulfur acceptors. Pyridoxal 5'-phosphate serves as cofactor.

It is found in the cytoplasm. The enzyme catalyses (sulfur carrier)-H + L-cysteine = (sulfur carrier)-SH + L-alanine. The protein operates within cofactor biosynthesis; iron-sulfur cluster biosynthesis. In terms of biological role, master enzyme that delivers sulfur to a number of partners involved in Fe-S cluster assembly, tRNA modification or cofactor biosynthesis. Catalyzes the removal of elemental sulfur atoms from cysteine to produce alanine. Functions as a sulfur delivery protein for Fe-S cluster synthesis onto IscU, an Fe-S scaffold assembly protein, as well as other S acceptor proteins. This chain is Cysteine desulfurase IscS, found in Rickettsia massiliae (strain Mtu5).